The sequence spans 160 residues: Surface-adhesin protein E (160 aa).

A signal peptide spans 1 to 15; that stretch reads MKKIILTLSLGLLTA. The N-palmitoyl cysteine moiety is linked to residue cysteine 16. The S-diacylglycerol cysteine moiety is linked to residue cysteine 16. The tract at residues 41-68 is interaction with laminin and plasminogen; it reads IRLVKNVNYYIDSESIWVDNQEPQIVHF. The interval 84–108 is interaction with vitronectin and epithelial cells; the sequence is PKRYARSVRQYKILNCANYHLTQVR.

In terms of assembly, homodimer. Interacts with host vitronectin, laminin and plasminogen. Can interact with both immobilized and soluble vitronectin.

Its subcellular location is the cell outer membrane. The protein resides in the cell surface. Functionally, acts as a multifunctional adhesin involved in direct interactions with host epithelial cells and host proteins, including vitronectin, laminin and plasminogen. In addition, interaction with serum vitronectin plays an important role in bacterial serum resistance, and conversion of plasminogen to plasmin at the cell surface aids in immune evasion and contributes to bacterial virulence. Induces a pro-inflammatory epithelial cell response, leading to interleukin-8 (IL-8) secretion and up-regulation of ICAM1. The polypeptide is Surface-adhesin protein E (pe) (Haemophilus influenzae (strain NTHi 3655)).